Here is a 388-residue protein sequence, read N- to C-terminus: Chorismate synthase (388 aa).

The NADP(+) site is built by arginine 39 and arginine 45. Residues 95 to 118 (EKNEKSRRVSRPRPGHADLVGGMK) are disordered. FMN is bound by residues 130-132 (RSS), 251-252 (NA), glycine 296, 311-315 (KPIPT), and arginine 337.

This sequence belongs to the chorismate synthase family. Homotetramer. The cofactor is FMNH2.

The enzyme catalyses 5-O-(1-carboxyvinyl)-3-phosphoshikimate = chorismate + phosphate. It functions in the pathway metabolic intermediate biosynthesis; chorismate biosynthesis; chorismate from D-erythrose 4-phosphate and phosphoenolpyruvate: step 7/7. In terms of biological role, catalyzes the anti-1,4-elimination of the C-3 phosphate and the C-6 proR hydrogen from 5-enolpyruvylshikimate-3-phosphate (EPSP) to yield chorismate, which is the branch point compound that serves as the starting substrate for the three terminal pathways of aromatic amino acid biosynthesis. This reaction introduces a second double bond into the aromatic ring system. This is Chorismate synthase from Listeria innocua serovar 6a (strain ATCC BAA-680 / CLIP 11262).